The following is a 385-amino-acid chain: Putative RNA methyltransferase YpsC (385 aa).

Residues 44–156 (AICRANLWLR…KDQALITLDS (113 aa)) form the THUMP domain.

The protein belongs to the methyltransferase superfamily. In terms of assembly, interacts with the RNA polymerase core.

The chain is Putative RNA methyltransferase YpsC (ypsC) from Bacillus subtilis (strain 168).